The sequence spans 323 residues: Protease Do-like 5, chloroplastic (323 aa).

The transit peptide at 1–28 (MTMALASSKAFSSIFNTLSPINQSKFVL) directs the protein to the chloroplast. Residues 29–73 (ACSGSNHVDVIDRRRRIMIFGSSLALTSSLLGSNQQRLPMESAIA) constitute a thylakoid transit peptide. Catalysis depends on charge relay system residues H147, D188, and S266. Residues 186-283 (DNDLAVLKIE…YGHTIGVNTA (98 aa)) form a serine protease region.

The protein belongs to the peptidase S1C family.

The protein localises to the plastid. The protein resides in the chloroplast thylakoid lumen. Functionally, probable serine protease. The chain is Protease Do-like 5, chloroplastic (DEGP5) from Arabidopsis thaliana (Mouse-ear cress).